We begin with the raw amino-acid sequence, 59 residues long: Large ribosomal subunit protein bL32 (59 aa).

2 disordered regions span residues 1–23 and 35–59; these read MAVQ…DFLT and EVHL…TKND. Basic residues predominate over residues 49–59; sequence RGKKVVKTKND.

This sequence belongs to the bacterial ribosomal protein bL32 family.

The protein is Large ribosomal subunit protein bL32 of Burkholderia ambifaria (strain MC40-6).